The following is a 285-amino-acid chain: Avenin-like b2 (285 aa).

The signal sequence occupies residues 1-18; it reads MKVFILALLALTATTAIA.

Belongs to the prolamin family. In terms of processing, contains disulfide bonds.

Functionally, seed storage protein. Might be integrated via inter-chain disulfide bonds within the glutenin polymer. The chain is Avenin-like b2 from Triticum aestivum (Wheat).